A 2343-amino-acid chain; its full sequence is Coagulation factor VIII (2343 aa).

The signal sequence occupies residues 1-19; it reads MQVELYTCCFLCLLPFSLS. 2 Plastocyanin-like domains span residues 20 to 199 and 207 to 343; these read ATRK…LLVC and ERTQ…VDSC. Residues 20–343 enclose the F5/8 type A 1 domain; sequence ATRKYYLGAV…MEAYVKVDSC (324 aa). Residues Asn233 and Asn253 are each glycosylated (N-linked (GlcNAc...) asparagine). 2 positions are modified to sulfotyrosine: Tyr359 and Tyr408. Plastocyanin-like domains lie at 393-567 and 577-724; these read KTWV…LLIC and NQMM…VSSC. The F5/8 type A 2 domain maps to 393-724; the sequence is KTWVHYIAAE…MTALLKVSSC (332 aa). An N-linked (GlcNAc...) asparagine glycan is attached at Asn595. 3 positions are modified to sulfotyrosine: Tyr731, Tyr732, and Tyr736. A compositionally biased stretch (polar residues) spans 752-761; that stretch reads PRSFSQNSRH. Disordered stretches follow at residues 752–774 and 828–865; these read PRSFSQNSRHPSTKEKQLKATTT and ADDHSRGAIERNKGPPEVASLRPELRHSEDREFTPEPE. A b region spans residues 754–1659; the sequence is SFSQNSRHPS…NPPVSKHHQR (906 aa). Basic and acidic residues-rich tracts occupy residues 828–841 and 850–861; these read ADDHSRGAIERNKG and PELRHSEDREFT. N-linked (GlcNAc...) asparagine glycosylation is found at Asn877, Asn921, Asn937, Asn938, Asn956, Asn1007, Asn1019, Asn1037, Asn1062, Asn1069, and Asn1080. Residues 1124–1147 form a disordered region; it reads GKNSLSSEQRPSPKQLTSLGSEKS. Positions 1125–1147 are enriched in polar residues; sequence KNSLSSEQRPSPKQLTSLGSEKS. N-linked (GlcNAc...) asparagine glycans are attached at residues Asn1179, Asn1193, Asn1275, Asn1290, Asn1308, Asn1341, Asn1391, Asn1419, Asn1429, Asn1453, Asn1547, and Asn1618. Polar residues predominate over residues 1302–1314; the sequence is TTRMSSNASQHVI. Positions 1302 to 1326 are disordered; it reads TTRMSSNASQHVITQRGKRSLKQPR. The tract at residues 1592 to 1632 is disordered; sequence KSQKKSQTNTAFKRKDTILPLGPCENNDSTAAINEGQDKPQ. Tyr1675 and Tyr1691 each carry sulfotyrosine. Plastocyanin-like domains are found at residues 1705-1869 and 1879-2032; these read KTRH…LLIC and GRQV…SKKC. Residues 1705-2032 form the F5/8 type A 3 domain; that stretch reads KTRHYFIAAV…TLFLVYSKKC (328 aa). N-linked (GlcNAc...) asparagine glycosylation occurs at Asn1821. 2 consecutive F5/8 type C domains span residues 2032–2180 and 2185–2337; these read CQTP…LLGC and CSMP…VLGC. 2 disulfides stabilise this stretch: Cys2032–Cys2180 and Cys2185–Cys2337. Asn2129 and Asn2281 each carry an N-linked (GlcNAc...) asparagine glycan.

This sequence belongs to the multicopper oxidase family. In terms of assembly, interacts with vWF. vWF binding is essential for the stabilization of F8 in circulation. Proteolytically cleaved by cathepsin CTSG to produce a partially activated form.

The protein resides in the secreted. It is found in the extracellular space. In terms of biological role, factor VIII, along with calcium and phospholipid, acts as a cofactor for factor IXa when it converts factor X to the activated form, factor Xa. The polypeptide is Coagulation factor VIII (F8) (Canis lupus familiaris (Dog)).